Consider the following 149-residue polypeptide: Transcriptional repressor NrdR (149 aa).

Residues 3-34 fold into a zinc finger; sequence CPFCFAVDTKVIDSRLVGEGSSVRRRRQCLVC. An ATP-cone domain is found at 49 to 139; it reads PRVVKSNDVR…VYRSFEDIKE (91 aa).

This sequence belongs to the NrdR family. Zn(2+) is required as a cofactor.

Its function is as follows. Negatively regulates transcription of bacterial ribonucleotide reductase nrd genes and operons by binding to NrdR-boxes. The protein is Transcriptional repressor NrdR of Klebsiella pneumoniae (strain 342).